Reading from the N-terminus, the 351-residue chain is Anthranilate phosphoribosyltransferase (351 aa).

5-phospho-alpha-D-ribose 1-diphosphate-binding positions include glycine 84, 87-88, 95-98, 113-121, and alanine 125; these read GD, NISS, and KHGNRGASS. An anthranilate-binding site is contributed by glycine 84. Serine 97 contributes to the Mg(2+) binding site. Asparagine 116 contributes to the anthranilate binding site. Arginine 171 contacts anthranilate. Residues aspartate 229 and lysine 230 each contribute to the Mg(2+) site.

The protein belongs to the anthranilate phosphoribosyltransferase family. Homodimer. Requires Mg(2+) as cofactor.

It carries out the reaction N-(5-phospho-beta-D-ribosyl)anthranilate + diphosphate = 5-phospho-alpha-D-ribose 1-diphosphate + anthranilate. It functions in the pathway amino-acid biosynthesis; L-tryptophan biosynthesis; L-tryptophan from chorismate: step 2/5. Catalyzes the transfer of the phosphoribosyl group of 5-phosphorylribose-1-pyrophosphate (PRPP) to anthranilate to yield N-(5'-phosphoribosyl)-anthranilate (PRA). The polypeptide is Anthranilate phosphoribosyltransferase (Clavibacter sepedonicus (Clavibacter michiganensis subsp. sepedonicus)).